A 316-amino-acid polypeptide reads, in one-letter code: L-lactate dehydrogenase (316 aa).

NAD(+)-binding positions include Val-16, Asp-37, Lys-42, Tyr-68, and Gly-82 to Ala-83. Substrate contacts are provided by Gln-85 and Arg-91. NAD(+) is bound by residues Ser-104, Ala-121–Asn-123, and Ser-146. Asn-123–Asp-126 contributes to the substrate binding site. Asp-151 to Arg-154 is a binding site for substrate. The beta-D-fructose 1,6-bisphosphate site is built by Arg-156 and His-171. His-178 acts as the Proton acceptor in catalysis. Tyr-222 bears the Phosphotyrosine mark. Position 231 (Thr-231) interacts with substrate.

It belongs to the LDH/MDH superfamily. LDH family. As to quaternary structure, homotetramer.

It localises to the cytoplasm. The catalysed reaction is (S)-lactate + NAD(+) = pyruvate + NADH + H(+). It participates in fermentation; pyruvate fermentation to lactate; (S)-lactate from pyruvate: step 1/1. Its activity is regulated as follows. Allosterically activated by fructose 1,6-bisphosphate (FBP). In terms of biological role, catalyzes the conversion of lactate to pyruvate. The chain is L-lactate dehydrogenase from Staphylococcus epidermidis (strain ATCC 12228 / FDA PCI 1200).